The chain runs to 440 residues: Enolase (440 aa).

Q168 is a binding site for (2R)-2-phosphoglycerate. E210 functions as the Proton donor in the catalytic mechanism. The Mg(2+) site is built by D249, E300, and D326. The (2R)-2-phosphoglycerate site is built by K351, R380, S381, and K402. K351 functions as the Proton acceptor in the catalytic mechanism.

Belongs to the enolase family. Mg(2+) serves as cofactor.

Its subcellular location is the cytoplasm. The protein resides in the secreted. The protein localises to the cell surface. It carries out the reaction (2R)-2-phosphoglycerate = phosphoenolpyruvate + H2O. It participates in carbohydrate degradation; glycolysis; pyruvate from D-glyceraldehyde 3-phosphate: step 4/5. Catalyzes the reversible conversion of 2-phosphoglycerate (2-PG) into phosphoenolpyruvate (PEP). It is essential for the degradation of carbohydrates via glycolysis. The protein is Enolase of Ureaplasma parvum serovar 3 (strain ATCC 27815 / 27 / NCTC 11736).